The following is a 436-amino-acid chain: 3-ketoacyl-CoA thiolase (436 aa).

Residue cysteine 99 is the Acyl-thioester intermediate of the active site. Residues histidine 392 and cysteine 422 each act as proton acceptor in the active site.

Belongs to the thiolase-like superfamily. Thiolase family. In terms of assembly, heterotetramer of two alpha chains (FadJ) and two beta chains (FadI).

The protein localises to the cytoplasm. The catalysed reaction is an acyl-CoA + acetyl-CoA = a 3-oxoacyl-CoA + CoA. It functions in the pathway lipid metabolism; fatty acid beta-oxidation. In terms of biological role, catalyzes the final step of fatty acid oxidation in which acetyl-CoA is released and the CoA ester of a fatty acid two carbons shorter is formed. The chain is 3-ketoacyl-CoA thiolase from Shewanella sp. (strain ANA-3).